A 212-amino-acid polypeptide reads, in one-letter code: Thymidylate kinase (212 aa).

Residue 7–14 (GIEGCGKS) participates in ATP binding.

Belongs to the thymidylate kinase family.

It carries out the reaction dTMP + ATP = dTDP + ADP. Its function is as follows. Phosphorylation of dTMP to form dTDP in both de novo and salvage pathways of dTTP synthesis. In Trichlorobacter lovleyi (strain ATCC BAA-1151 / DSM 17278 / SZ) (Geobacter lovleyi), this protein is Thymidylate kinase.